We begin with the raw amino-acid sequence, 409 residues long: N-acetylglucosamine-6-phosphate deacetylase (409 aa).

Glu-143 contacts a divalent metal cation. 154–155 (AH) serves as a coordination point for substrate. Residues His-211 and His-232 each contribute to the a divalent metal cation site. Residues 235 to 236 (NA), Arg-243, and 269 to 272 (DGIH) each bind substrate. Asp-294 serves as the catalytic Proton donor/acceptor. Residue 328-330 (LSG) coordinates substrate.

The protein belongs to the metallo-dependent hydrolases superfamily. NagA family. A divalent metal cation serves as cofactor.

The enzyme catalyses N-acetyl-D-glucosamine 6-phosphate + H2O = D-glucosamine 6-phosphate + acetate. It functions in the pathway amino-sugar metabolism; N-acetylneuraminate degradation. Functionally, hydrolyzes the N-glycolyl group from N-glycolylglucosamine 6-phosphate (GlcNGc-6-P) in the N-glycolylneuraminic acid (Neu5Gc) degradation pathway. The sequence is that of N-acetylglucosamine-6-phosphate deacetylase (AMDHD2) from Bos taurus (Bovine).